We begin with the raw amino-acid sequence, 124 residues long: MFTFALLLLCVQGCLIQNVYGQCCGCGCGGGCGCGCYGGEGDGNVNVCGELPVCGETLVCGRVPICGGVCFKGPACASGCVSICGRCCGCGCGGCGGCGCGCGGCGCGCGGCGGCGCGRRCCCC.

The first 21 residues, 1–21 (MFTFALLLLCVQGCLIQNVYG), serve as a signal peptide directing secretion. The interval 22-35 (QCCGCGCGGGCGCG) is left arm. Residues 36–83 (CYGGEGDGNVNVCGELPVCGETLVCGRVPICGGVCFKGPACASGCVSI) form a central domain region. Residues 84–124 (CGRCCGCGCGGCGGCGCGCGGCGCGCGGCGGCGCGRRCCCC) are right arm (Gly- and Cys-rich tandem repeats).

Belongs to the chorion protein family.

In terms of biological role, this protein is one of many from the eggshell of the silk moth. The protein is Chorion class high-cysteine HCA protein 12 of Bombyx mori (Silk moth).